A 238-amino-acid polypeptide reads, in one-letter code: MRPAGRAPQQVRPLTLTRHYTKHAEGSVLVEFGDTKVLCTATVEEGVPRFLKGQGQGWITAEYGMLPRSTHSRNAREAAKGKQGGRTLEIQRLIARSLRAAVDLKKLGEFTITLDCDVLQADGGTRTASISGACVALADALNALVANGKLKANPMKGLVAAVSVGIVNGEALCDLEYVEDSAAETDMNVVMMEDGRMIEVQGTAEGEPFSHDELLALLALARGGIDTIFQAQKAALAD.

Residues R86 and 124 to 126 (GTR) each bind phosphate.

The protein belongs to the RNase PH family. Homohexameric ring arranged as a trimer of dimers.

The enzyme catalyses tRNA(n+1) + phosphate = tRNA(n) + a ribonucleoside 5'-diphosphate. In terms of biological role, phosphorolytic 3'-5' exoribonuclease that plays an important role in tRNA 3'-end maturation. Removes nucleotide residues following the 3'-CCA terminus of tRNAs; can also add nucleotides to the ends of RNA molecules by using nucleoside diphosphates as substrates, but this may not be physiologically important. Probably plays a role in initiation of 16S rRNA degradation (leading to ribosome degradation) during starvation. In Serratia proteamaculans (strain 568), this protein is Ribonuclease PH.